The chain runs to 85 residues: Small ribosomal subunit protein bS16 (85 aa).

Belongs to the bacterial ribosomal protein bS16 family.

The chain is Small ribosomal subunit protein bS16 from Acinetobacter baylyi (strain ATCC 33305 / BD413 / ADP1).